A 160-amino-acid chain; its full sequence is Protein-export protein SecB (160 aa).

It belongs to the SecB family. Homotetramer, a dimer of dimers. One homotetramer interacts with 1 SecA dimer.

The protein localises to the cytoplasm. In terms of biological role, one of the proteins required for the normal export of preproteins out of the cell cytoplasm. It is a molecular chaperone that binds to a subset of precursor proteins, maintaining them in a translocation-competent state. It also specifically binds to its receptor SecA. This Agrobacterium fabrum (strain C58 / ATCC 33970) (Agrobacterium tumefaciens (strain C58)) protein is Protein-export protein SecB.